The primary structure comprises 191 residues: dCTP deaminase, dUMP-forming (191 aa).

Residues Lys-101–Arg-106, Asp-119, Thr-127–Glu-129, Gln-148, Tyr-162, and Gln-174 each bind dCTP. The active-site Proton donor/acceptor is Glu-129.

This sequence belongs to the dCTP deaminase family. In terms of assembly, homotrimer.

The catalysed reaction is dCTP + 2 H2O = dUMP + NH4(+) + diphosphate. It participates in pyrimidine metabolism; dUMP biosynthesis; dUMP from dCTP: step 1/1. In terms of biological role, bifunctional enzyme that catalyzes both the deamination of dCTP to dUTP and the hydrolysis of dUTP to dUMP without releasing the toxic dUTP intermediate. The chain is dCTP deaminase, dUMP-forming from Streptomyces avermitilis (strain ATCC 31267 / DSM 46492 / JCM 5070 / NBRC 14893 / NCIMB 12804 / NRRL 8165 / MA-4680).